Here is a 439-residue protein sequence, read N- to C-terminus: Xaa-Pro dipeptidase (439 aa).

Aspartate 244, aspartate 255, histidine 335, glutamate 380, and glutamate 419 together coordinate Mn(2+).

The protein belongs to the peptidase M24B family. Bacterial-type prolidase subfamily. Mn(2+) is required as a cofactor.

The catalysed reaction is Xaa-L-Pro dipeptide + H2O = an L-alpha-amino acid + L-proline. Functionally, splits dipeptides with a prolyl residue in the C-terminal position. This chain is Xaa-Pro dipeptidase, found in Shewanella woodyi (strain ATCC 51908 / MS32).